Consider the following 194-residue polypeptide: Lysozyme g-like protein 1 (194 aa).

The first 19 residues, 1-19, serve as a signal peptide directing secretion; it reads MSALWLLLGLLALMDLSES. 2 cysteine pairs are disulfide-bonded: Cys24–Cys80 and Cys38–Cys49.

The protein belongs to the glycosyl hydrolase 23 family.

It localises to the secreted. This Homo sapiens (Human) protein is Lysozyme g-like protein 1 (LYG1).